Consider the following 214-residue polypeptide: Histidine biosynthesis bifunctional protein HisIE (214 aa).

The tract at residues 1 to 114 is phosphoribosyl-AMP cyclohydrolase; the sequence is MDLSAVRFDE…LEGEKDLGFV (114 aa). The phosphoribosyl-ATP pyrophosphohydrolase stretch occupies residues 115–214; it reads VGQVYATIKE…RSPYDGSHGN (100 aa).

In the N-terminal section; belongs to the PRA-CH family. It in the C-terminal section; belongs to the PRA-PH family.

Its subcellular location is the cytoplasm. It catalyses the reaction 1-(5-phospho-beta-D-ribosyl)-ATP + H2O = 1-(5-phospho-beta-D-ribosyl)-5'-AMP + diphosphate + H(+). The enzyme catalyses 1-(5-phospho-beta-D-ribosyl)-5'-AMP + H2O = 1-(5-phospho-beta-D-ribosyl)-5-[(5-phospho-beta-D-ribosylamino)methylideneamino]imidazole-4-carboxamide. Its pathway is amino-acid biosynthesis; L-histidine biosynthesis; L-histidine from 5-phospho-alpha-D-ribose 1-diphosphate: step 2/9. The protein operates within amino-acid biosynthesis; L-histidine biosynthesis; L-histidine from 5-phospho-alpha-D-ribose 1-diphosphate: step 3/9. The polypeptide is Histidine biosynthesis bifunctional protein HisIE (Thermus thermophilus (strain ATCC BAA-163 / DSM 7039 / HB27)).